The sequence spans 370 residues: 3-isopropylmalate dehydrogenase 1 (370 aa).

Substrate-binding residues include Arg98, Arg108, Arg136, and Asp227. Asp227, Asp251, and Asp255 together coordinate Mg(2+). Residue 289–301 coordinates NAD(+); it reads GSAPDIAGQGIAN.

This sequence belongs to the isocitrate and isopropylmalate dehydrogenases family. LeuB type 1 subfamily. In terms of assembly, homodimer. It depends on Mg(2+) as a cofactor. Mn(2+) is required as a cofactor.

It localises to the cytoplasm. It catalyses the reaction (2R,3S)-3-isopropylmalate + NAD(+) = 4-methyl-2-oxopentanoate + CO2 + NADH. It functions in the pathway amino-acid biosynthesis; L-leucine biosynthesis; L-leucine from 3-methyl-2-oxobutanoate: step 3/4. Its function is as follows. Catalyzes the oxidation of 3-carboxy-2-hydroxy-4-methylpentanoate (3-isopropylmalate) to 3-carboxy-4-methyl-2-oxopentanoate. The product decarboxylates to 4-methyl-2 oxopentanoate. This Bordetella bronchiseptica (strain ATCC BAA-588 / NCTC 13252 / RB50) (Alcaligenes bronchisepticus) protein is 3-isopropylmalate dehydrogenase 1.